Here is a 645-residue protein sequence, read N- to C-terminus: MTPPLIELKDVTRYYGSGDTEVRALDGVSLTIETGEFVAIVGQSGSGKSTLMNLLGCLDRPTNGRYAIRGQNVSELDPDNLAALRRETFGFIFQRYNLLASVSASENVEIPAVYAGLALSERREKAAGLLAKLGLGERVHHKPGQLSGGQQQRVAVARALVNDAEVILADEPTGALDSGSSNDLLNLLEELHASGRTIILITHDQKVAARAKRVIEIRDGKIISDSGNKQAAAEEAPQYRYARKGPSPIAQVAESVKMAFRSLRANLFRTALTLLGVVIGVSAVVAMLAIGEGSRAEVMARFESMGPNLLFVRPGAPGTRMRGGAIATLTLEDAQALGELENILAAVPSRSTNATLRNGGNDYSSSIEGVSETWPIAQNRDMLYGTFFTKDDVDRRIGAVVLGTTTAGNLFDDIESAVGQYVFLGGAPFEVAGILESKGASSWGQDQDDIALVPITTGMMRLFGQSYLSSITLAVDDTDRITETEAAAHAFLLARHGTEDFQIRNTASILASVEETQNSFSILLGSVAAISLLVGGIGVMNIMLVSVSERTREIGVRMATGARRSDIQTQFIVESLVVGGLGGIAGVAIGFGIVFIIAQMGMTVAVTPLPAILAFSSALGTGLVFGLLPARQASRLDPVAALASE.

One can recognise an ABC transporter domain in the interval 6–244 (IELKDVTRYY…EAPQYRYARK (239 aa)). 42–49 (GQSGSGKS) serves as a coordination point for ATP. Helical transmembrane passes span 271-291 (ALTLLGVVIGVSAVVAMLAIG), 520-540 (FSILLGSVAAISLLVGGIGVM), 577-597 (VVGGLGGIAGVAIGFGIVFII), and 608-628 (PLPAILAFSSALGTGLVFGLL).

The protein belongs to the ABC transporter superfamily. Macrolide exporter (TC 3.A.1.122) family. In terms of assembly, homodimer.

The protein resides in the cell inner membrane. Non-canonical ABC transporter that contains transmembrane domains (TMD), which form a pore in the inner membrane, and an ATP-binding domain (NBD), which is responsible for energy generation. Confers resistance against macrolides. This is Macrolide export ATP-binding/permease protein MacB from Hyphomonas neptunium (strain ATCC 15444).